A 752-amino-acid polypeptide reads, in one-letter code: ATP-dependent RNA helicase DRS1 (752 aa).

Disordered stretches follow at residues 1–61 (MVVG…NLDE) and 119–223 (GLVK…TEGD). Acidic residues predominate over residues 19–34 (DSEDDVPILDSSDDEK). Over residues 40 to 51 (TTKKRKGKNNKK) the composition is skewed to basic residues. Over residues 124–142 (AHIDSKQEEETEKEKVEKE) the composition is skewed to basic and acidic residues. 2 stretches are compositionally biased toward acidic residues: residues 167–191 (NQSEEEEEEEEKEEEEEEEEEQEEM) and 200–209 (DEIDEEDDSE). A Phosphoserine modification is found at Ser208. Residues 231–259 (ENFNSLSLSRPVLKGLASLGYVKPSPIQS) carry the Q motif motif. Positions 262–437 (IPIALLGKDI…SLSLKKPVRI (176 aa)) constitute a Helicase ATP-binding domain. 275–282 (AVTGSGKT) provides a ligand contact to ATP. The DEAD box motif lies at 385–388 (DEAD). The region spanning 448 to 639 (KLTQEFVRIR…SMNDTIEDIL (192 aa)) is the Helicase C-terminal domain. Positions 621-667 (IEETNKLVESMNDTIEDILVEEKEEKEILRAEMQLRKGENMLKHKKE) form a coiled coil. The interval 673 to 752 (RRTWFQSESD…NKKKGFKSRR (80 aa)) is disordered. Positions 694 to 705 (RNKKVTNSKKRK) are enriched in basic residues. The span at 722–734 (TKTDRIADQERTF) shows a compositional bias: basic and acidic residues. A compositionally biased stretch (basic residues) spans 735 to 752 (KKQKSTNSNKKKGFKSRR).

It belongs to the DEAD box helicase family. DDX27/DRS1 subfamily. As to quaternary structure, interacts with RRP1 and associates with pre-ribosomal particles.

It is found in the nucleus. Its subcellular location is the nucleolus. It carries out the reaction ATP + H2O = ADP + phosphate + H(+). Functionally, ATP-binding RNA helicase involved in ribosome assembly. The protein is ATP-dependent RNA helicase DRS1 (DRS1) of Saccharomyces cerevisiae (strain ATCC 204508 / S288c) (Baker's yeast).